A 609-amino-acid polypeptide reads, in one-letter code: WD repeat-containing protein 1 (609 aa).

13 WD repeats span residues 6 to 47 (EIKK…IRNI), 50 to 89 (PAIA…IWDT), 95 to 137 (LLKY…LWDS), 140 to 178 (SVGE…FFEG), 182 to 220 (KFKF…IYDG), 226 to 265 (VCAL…IWDV), 272 to 308 (STFN…YLDK), 313 to 353 (KPLR…YWDS), 360 to 410 (GFSG…KMDV), 434 to 476 (MKDK…LYSI), 482 to 520 (KSDD…VFSV), 525 to 563 (VEHN…VWTV), and 568 to 606 (TRIK…EWSI).

Belongs to the WD repeat AIP1 family.

Its subcellular location is the cytoplasm. The protein localises to the cytoskeleton. Induces disassembly of actin filaments in conjunction with ADF/cofilin family proteins. Enhances cofilin-mediated actin severing. This chain is WD repeat-containing protein 1 (WDR1), found in Gallus gallus (Chicken).